The sequence spans 258 residues: Axonemal dynein light intermediate polypeptide 1 (258 aa).

Disordered stretches follow at residues 1-60 (MIPP…CVPD) and 207-231 (VNEQ…EEKK). Positions 34-44 (SPQQPGPSGSA) are enriched in low complexity. A coiled-coil region spans residues 176 to 255 (MRKALQAEQG…LKAQLEGIIA (80 aa)).

It belongs to the inner dynein arm light chain family. In terms of assembly, interacts with CFAP45. Interacts with DYNC1H1. In terms of tissue distribution, expressed in many tissues. A smaller 0.9 kb and a larger 2.5 kb transcripts were detected at the highest level in the testis, at medium levels in the prostate, heart, liver, lung and pancreas, at low levels in the ovary, skeletal muscle and small intestine. Not detected in spleen, colon epithelium, thymus or peripheral blood leukocytes. The 0.9 kb transcript is expressed at a 20-fold higher level than the 2.5 kb transcript in the testis. Expressed in spermatozoa and airway epithelial cells (at protein level).

The protein localises to the cell projection. It localises to the cilium. It is found in the flagellum. Its subcellular location is the dynein axonemal particle. The protein resides in the cytoplasm. Involved in sperm flagellum assembly. The chain is Axonemal dynein light intermediate polypeptide 1 from Homo sapiens (Human).